A 326-amino-acid polypeptide reads, in one-letter code: Nuclear egress protein 1 (326 aa).

A CCCH-type zinc finger spans residues 115-244 (CLSLSGMGYY…YAVFPTKSVH (130 aa)).

This sequence belongs to the herpesviridae NEC1 protein family. As to quaternary structure, forms a heterohexameric complex with NEC2. Interacts with capsid vertex specific component 2/CVC2; this interaction directs the capsid to the host inner nuclear membrane to initiate budding. Post-translationally, phosphorylated at serine residues in the N-terminus. This phosphorylation regulates the localization within the inner nuclear membrane.

It localises to the host nucleus inner membrane. Functionally, plays an essential role in virion nuclear egress, the first step of virion release from infected cell. Within the host nucleus, NEC1 interacts with the newly formed capsid through the vertexes and directs it to the inner nuclear membrane by associating with NEC2. Induces the budding of the capsid at the inner nuclear membrane as well as its envelopment into the perinuclear space. There, the NEC1/NEC2 complex promotes the fusion of the enveloped capsid with the outer nuclear membrane and the subsequent release of the viral capsid into the cytoplasm where it will reach the secondary budding sites in the host Golgi or trans-Golgi network. The polypeptide is Nuclear egress protein 1 (Equine herpesvirus 1 (strain Ab4p) (EHV-1)).